A 494-amino-acid polypeptide reads, in one-letter code: UPF0371 protein SPT_0390 (494 aa).

The protein belongs to the UPF0371 family.

The polypeptide is UPF0371 protein SPT_0390 (Streptococcus pneumoniae (strain Taiwan19F-14)).